The sequence spans 138 residues: MREENKGMPSGGGSDEGLASAAARGLVEKVRQLLEAGADPNGVNRFGRRAIQVMMMGSARVAELLLLHGAEPNCADPATLTRPVHDAAREGFLDTLVVLHRAGARLDVRDAWGRLPVDLAEERGHRDVAGYLRTATGD.

An ANK 1; truncated repeat occupies 13 to 39 (GSDEGLASAAARGLVEKVRQLLEAGAD). ANK repeat units follow at residues 46–74 (FGRR…EPNC), 79–108 (TLTR…RLDV), and 112–138 (WGRL…ATGD).

The protein belongs to the CDKN2 cyclin-dependent kinase inhibitor family. As to quaternary structure, heterodimer of CDKN2B with CDK4 or CDK6. Isoform 2 does not interact with CDK4 nor CDK6. Isoform 2 is expressed in normal (keratinocytes, fibroblasts) and tumor cell lines.

The protein resides in the cytoplasm. Its function is as follows. Interacts strongly with CDK4 and CDK6. Potent inhibitor. Potential effector of TGF-beta induced cell cycle arrest. The polypeptide is Cyclin-dependent kinase 4 inhibitor B (CDKN2B) (Homo sapiens (Human)).